The following is a 151-amino-acid chain: Ribosome maturation factor RimP (151 aa).

This sequence belongs to the RimP family.

It is found in the cytoplasm. Its function is as follows. Required for maturation of 30S ribosomal subunits. The chain is Ribosome maturation factor RimP from Shewanella piezotolerans (strain WP3 / JCM 13877).